A 597-amino-acid polypeptide reads, in one-letter code: tRNA uridine 5-carboxymethylaminomethyl modification enzyme MnmG (597 aa).

FAD is bound at residue 10–15 (GGGHAG). 267–281 (GPRYCPSIEDKVVRF) lines the NAD(+) pocket.

This sequence belongs to the MnmG family. In terms of assembly, homodimer. Heterotetramer of two MnmE and two MnmG subunits. The cofactor is FAD.

Its subcellular location is the cytoplasm. NAD-binding protein involved in the addition of a carboxymethylaminomethyl (cmnm) group at the wobble position (U34) of certain tRNAs, forming tRNA-cmnm(5)s(2)U34. The protein is tRNA uridine 5-carboxymethylaminomethyl modification enzyme MnmG of Thermus thermophilus (strain ATCC BAA-163 / DSM 7039 / HB27).